A 205-amino-acid chain; its full sequence is Ribosomal RNA small subunit methyltransferase G 1 (205 aa).

Residues Gly77, Leu82, 100–102, 129–130, and Arg138 contribute to the S-adenosyl-L-methionine site; these read EKS and LE.

This sequence belongs to the methyltransferase superfamily. RNA methyltransferase RsmG family.

It is found in the cytoplasm. The catalysed reaction is guanosine(527) in 16S rRNA + S-adenosyl-L-methionine = N(7)-methylguanosine(527) in 16S rRNA + S-adenosyl-L-homocysteine. Its function is as follows. Specifically methylates the N7 position of guanine in position 527 of 16S rRNA. This Bdellovibrio bacteriovorus (strain ATCC 15356 / DSM 50701 / NCIMB 9529 / HD100) protein is Ribosomal RNA small subunit methyltransferase G 1.